A 2150-amino-acid polypeptide reads, in one-letter code: MELKTFKDLNDDIIGDTSPVINTGDQPNPLRTQQQQLQQQQQQQQQQQQQQQQQQQQQQQQQQQQQHHIPQQLYQKQQQQQHSHSYGNHSFIHNVSPTSPSYDINNNNNNNNNNNNNNNNNNNNNNNSNNNNNNNNNNKNNYNNNYYYSPIENSNISKSLEESVLNQFPHNFNLNSSNNNYLNNSSSLHNINQSVNSLSNNNNNQTNQQPINNNNNNNNNNNNNNSNNSNNSNNNNNGNNNNNITDSPTKSKRHSTYETNIGSHQRRKSIQSLIANSAIHSFSKLKNKPLSSSTPSTVNTCGAVNNNSNNNNNNNNNSTGSLGAIPMDRSFDGNINTITEESTGGNNSPRSNCGSNCGSNGGIPLSPRNLSSLNSGVNVSPRNIHLNNLNNNSSNLPPLSPRHINFHINVSNLNNNNNNNINPNNNPNNSNNSNNNVSPRNNNHNISPRGSNISPRSNNGGSTTISPRNISNNNNIINNINNNNILTPPRNSPRLENVNPTNSPRLLATSLNSTLPIVSSLTSSNNNNQSNNNTNPSINNNNGRNGHCIQTISEEILGNKPVVYNNGNNNNNNNTNNSTTSNNNITTNNNNNNNNNINNNVLSTPRKRTKGNHSKTNSLQDFETSSMNGGDDSISGAGSGGSLRRRNKDDNDENDGNSNNTNSNNSNNNNNNNNNSSNNNNNNSNNNNNNNNNNNNNNNNNNNNNNNNNNNNNNNNNNNNNNNNNNNYHNGATMMMSHNHQSIGMSSSPKKNNFKPFSRNCSLMGMGRRAWAIILGLFIVGSSISILATLVLRYSEENSIADDFARVARDRFTMLRIEFNNRLYITQTLSLLLSVFPSTSEDQFVPFSKLWSDNAEGLEGIMWAPRVSNLDRYTWEIEHSVKIREIVTNPNNSSDMRDVPAAAASDYYPILFSEPQSSNDHFKGYNIYSDMWRRPSLNKTRDTGEKVSVASPYINKLANVPKNSRSNVLLYIYQAVYTYGKVLSTVEDRRHEVIGFASCRFFISRMVSASLQRLTEEDSLDLYVFDLDSTPIGELIYYRASNAGNDDGSSPTNIMNGKMLEDRSDMIYYNTMNVGGRNWMIALRPSRKFTNKHYTFYPYAIGGVCMLLSALVSFWFAVNTKHNIKLSATNEDLHKEIYNRKLAEKALAESQERLELAMEGSEDAVWDWKVNTGELHISSRWFQILKAHDTSYQSRTLYEELKSSSTNNLNFKGDSKNGGSNNGTFNLFKNGKVDSSSPQSITNVNTTNGGGGGELRKSNSGYLYNDELFSPIILEEMVSSPNTHQLAIWNMKFLAELIHPDDKQKFISEIKKTITRETSIMEIECRMRKKYGGYLYIIMRGKVVSNETSFKDNSLRMAGTLRDMTSRKDMQRLILEKEAAEEANKAKSAFVATVSHEVRTPLSGVIGVSDLLLETNLSEEQRDYVQTIQKSSQALLTIINDILDYSKLESRQLKMETLPFSIIETCQAVIHMLSVAANDDVDILLRVPPNVPRIIFGDAMRMRQVLLNLLSNAIKFTSRGHVLTDISVDDSIPPTNTEEEIIHLCITIEDTGIGIPQSLFDSIFEPFSQADNSTTRKYGGTGLGLSITKRLIEEVMGGTIQVSSIVGQGSKFKCIIPFLLPNTSPSDLNLISPSSLPKPFINRSPKSTYSFTDKKNSVPSTPIPSGDILINKVCLLICRDTVTELVFKEQLEWLGMIVKQVPRNVIDSIKNTILNNNNNNNNNNNNNNNNSNNSSSIISPSSLDYSDENEHLDLVLIDLEILTEHLKIPSNVPIIFITPTKFNISKHNGILNKWITKSPNQRVELIRRPAITDKLIPIISKCIKSQVQFTSGSSQLQSQQANLQQQLLHQQLCNNGQTLNNNYNSGGIGGGGGGGGSNTMNGSSGNLSNNNNFGQTPLSSGLVLLVHTGRTPPLFNNNGNSIIPPLELAVDHHGNQQQQLYQQQQQQQNNSSGNFQQFYQQQNNNSNNSFTPTLPNENSNNSIMNNSLNNNNTTPSNVTPTLFTSSPLDLQGRDTPVLQPPAYRKKALIVEDNELNRKVLAQLFKKIDWTISFAENGREALKEITGERCFDIVFMDCQMPVLDGFQTTKIIRSKERENNWKRMNIVALSAGSSSSFVQDCLDSGMDSFMGKPITLATLKDALAKWGGYNN.

The span at 1 to 10 shows a compositional bias: basic and acidic residues; that stretch reads MELKTFKDLN. 8 disordered regions span residues 1–41, 68–149, 184–267, 286–323, 339–359, 415–505, 520–546, and 560–733; these read MELK…QQQQ, HIPQ…YYYS, NSSS…HQRR, KNKP…GSLG, TEES…NCGS, NNNN…NSPR, SLTS…GRNG, and KPVV…NGAT. The segment covering 19 to 32 has biased composition (polar residues); sequence PVINTGDQPNPLRT. A compositionally biased stretch (low complexity) spans 68 to 81; that stretch reads HIPQQLYQKQQQQQ. Residues 82–104 show a composition bias toward polar residues; sequence HSHSYGNHSFIHNVSPTSPSYDI. Composition is skewed to low complexity over residues 105-145 and 184-244; these read NNNN…YNNN and NSSS…NNNI. Polar residues predominate over residues 289-304; the sequence is PLSSSTPSTVNTCGAV. Composition is skewed to low complexity over residues 305–318, 344–359, and 415–447; these read NNNS…NNNS, GGNN…NCGS, and NNNN…HNIS. Polar residues predominate over residues 448 to 468; that stretch reads PRGSNISPRSNNGGSTTISPR. Composition is skewed to low complexity over residues 469–485, 520–545, and 565–600; these read NISN…NNNI, SLTS…NGRN, and NNGN…INNN. The span at 614 to 628 shows a compositional bias: polar residues; that stretch reads SKTNSLQDFETSSMN. The segment covering 657–727 has biased composition (low complexity); that stretch reads NSNNTNSNNS…NNNNNNNNNN (71 aa). Residues 772–792 traverse the membrane as a helical segment; sequence AIILGLFIVGSSISILATLVL. The 245-residue stretch at 838-1082 folds into the CHASE domain; the sequence is STSEDQFVPF…NVGGRNWMIA (245 aa). A helical transmembrane segment spans residues 1098–1118; that stretch reads PYAIGGVCMLLSALVSFWFAV. Residues 1139–1164 are a coiled coil; it reads NRKLAEKALAESQERLELAMEGSEDA. Disordered stretches follow at residues 1209 to 1228 and 1233 to 1252; these read LNFK…FNLF and VDSS…GGGG. A PAS domain is found at 1235–1317; the sequence is SSSPQSITNV…SEIKKTITRE (83 aa). The 56-residue stretch at 1321–1376 folds into the PAC domain; the sequence is MEIECRMRKKYGGYLYIIMRGKVVSNETSFKDNSLRMAGTLRDMTSRKDMQRLILE. Positions 1393–1620 constitute a Histidine kinase domain; sequence TVSHEVRTPL…KFKCIIPFLL (228 aa). His-1396 carries the phosphohistidine; by autocatalysis modification. Disordered regions lie at residues 1874–1893, 1933–1952, and 1962–2017; these read GGGS…NNNF, HGNQ…NNSS, and QNNN…DTPV. Composition is skewed to low complexity over residues 1878 to 1893, 1935 to 1952, and 1962 to 2002; these read NTMN…NNNF, NQQQ…NNSS, and QNNN…TPTL. The 121-residue stretch at 2026–2146 folds into the Response regulatory domain; the sequence is KALIVEDNEL…TLKDALAKWG (121 aa). Asp-2076 carries the 4-aspartylphosphate modification.

Interacts with SDF-2, an acbA peptide involved in sporulation.

The protein localises to the cell membrane. It catalyses the reaction ATP + protein L-histidine = ADP + protein N-phospho-L-histidine.. In terms of biological role, acts as a receptor histidine kinase for the cytokinin SDF-2 in a signal transduction pathway that regulates prestalk gene expression and controls terminal differentiation of prespore cells. Binding of SDF-2 to this protein inhibits phosphorelay and induces rapid sporulation. This protein undergoes an ATP-dependent autophosphorylation at a conserved histidine residue in the kinase core, and a phosphoryl group is then transferred to a conserved aspartate residue in the receiver domain. This Dictyostelium discoideum (Social amoeba) protein is Hybrid signal transduction histidine kinase A (dhkA).